Consider the following 353-residue polypeptide: MEKTLETVPLERKKREKEQFRKLFIGGLSFETTEESLRNYYEQWGKLTDCVVMRDPASKRSRGFGFVTFSSMAEVDAAMAARPHSIDGRVVEPKRAVAREESGKPGAHVTVKKLFVGGIKEDTEEHHLRDYFEEYGKIDTIEIITDRQSGKKRGFGFVTFDDHDPVDKIVLQKHHTINGHNAEVRKALSRQEMQEVQSSRSGRGGNFGFGDSRGGGGNFGPGPGSNFRGGSDGYGSGRGFGDGYNGYGGGPGGGNFGGSPGYGGGRGGYGGGGPGYGNQGGGYGGGYDNYGGGNYGSGNYNDFGNYNQQPSNYGPMKSGNFGGSRNMGGPYGGGNYGPGGSGGSGGYGGRSRY.

The residue at position 1 (methionine 1) is an N-acetylmethionine. Threonine 4 bears the Phosphothreonine mark. Positions 9–15 (PLERKKR) match the Nuclear localization signal motif. RRM domains are found at residues 21–104 (RKLF…ESGK) and 112–191 (KKLF…LSRQ). A Glycyl lysine isopeptide (Lys-Gly) (interchain with G-Cter in SUMO2) cross-link involves residue lysine 22. A Phosphoserine modification is found at serine 29. Arginine 38 carries the post-translational modification Omega-N-methylarginine. Serine 85 carries the phosphoserine modification. Position 104 is an N6,N6-dimethyllysine; alternate (lysine 104). Lysine 104 participates in a covalent cross-link: Glycyl lysine isopeptide (Lys-Gly) (interchain with G-Cter in SUMO2); alternate. Glycyl lysine isopeptide (Lys-Gly) (interchain with G-Cter in SUMO2) cross-links involve residues lysine 112, lysine 120, and lysine 137. Threonine 140 is modified (phosphothreonine). Residue serine 149 is modified to Phosphoserine. Residue lysine 152 forms a Glycyl lysine isopeptide (Lys-Gly) (interchain with G-Cter in SUMO2) linkage. Threonine 159 bears the Phosphothreonine mark. Residues lysine 168 and lysine 173 each participate in a glycyl lysine isopeptide (Lys-Gly) (interchain with G-Cter in SUMO2); alternate cross-link. N6-acetyllysine; alternate occurs at positions 168 and 173. Threonine 176 bears the Phosphothreonine mark. Residue lysine 186 forms a Glycyl lysine isopeptide (Lys-Gly) (interchain with G-Cter in SUMO2) linkage. Phosphoserine occurs at positions 189 and 201. Residues 193-353 (MQEVQSSRSG…SGGYGGRSRY (161 aa)) form a disordered region. A compositionally biased stretch (gly residues) spans 202–223 (GRGGNFGFGDSRGGGGNFGPGP). The residue at position 203 (arginine 203) is an Asymmetric dimethylarginine; alternate. Dimethylated arginine; alternate is present on arginine 203. An Omega-N-methylarginine; alternate modification is found at arginine 203. At serine 212 the chain carries Phosphoserine. The residue at position 213 (arginine 213) is an Asymmetric dimethylarginine; alternate. Arginine 213 bears the Dimethylated arginine; alternate mark. Arginine 213 carries the post-translational modification Omega-N-methylarginine; alternate. A Phosphoserine modification is found at serine 225. Arginine 228 bears the Omega-N-methylarginine mark. 2 positions are modified to phosphoserine: serine 231 and serine 236. An Omega-N-methylarginine modification is found at arginine 238. Serine 259 is subject to Phosphoserine. Asymmetric dimethylarginine; alternate is present on arginine 266. Arginine 266 carries the post-translational modification Omega-N-methylarginine; alternate. Residues 308–347 (QQPSNYGPMKSGNFGGSRNMGGPYGGGNYGPGGSGGSGGY) form a nuclear targeting sequence region. Over residues 320 to 353 (NFGGSRNMGGPYGGGNYGPGGSGGSGGYGGRSRY) the composition is skewed to gly residues. Serine 324 carries the phosphoserine modification. Position 325 is an omega-N-methylarginine (arginine 325). A Phosphotyrosine modification is found at tyrosine 331. Phosphoserine occurs at positions 341 and 344. A Phosphotyrosine modification is found at tyrosine 347. At arginine 350 the chain carries Omega-N-methylarginine.

As to quaternary structure, identified in the spliceosome C complex. Identified in a IGF2BP1-dependent mRNP granule complex containing untranslated mRNAs. Interacts with IGF2BP1. Interacts with C9orf72. Interacts with DGCR8. Interacts with TARDBP. Interacts with CKAP5. Interacts with PPIA/CYPA. Interacts (via C-terminus) with FAM76B; the interaction results in retention of HNRNPA2B1 in the nucleus and inhibition of the NF-kappa-B-mediated inflammatory pathway. Interacts with NF-kappa-B inhibitors NFKBIA and NFKBIE; the interaction may be mediated by the RRM2 domain of HNRNPA2B1, and HNRNPA2B1 may interact simultaneously with FAM76B and either NFKBIA or NFKBIE to form a complex. In terms of processing, sumoylated in exosomes, promoting miRNAs-binding. Post-translationally, asymmetric dimethylation at Arg-266 constitutes the major methylation site. According to a report, methylation affects subcellular location and promotes nuclear localization. According to another report, methylation at Arg-266 does not influence nucleocytoplasmic shuttling.

The protein localises to the nucleus. It localises to the nucleoplasm. Its subcellular location is the cytoplasmic granule. The protein resides in the secreted. It is found in the extracellular exosome. In terms of biological role, heterogeneous nuclear ribonucleoprotein (hnRNP) that associates with nascent pre-mRNAs, packaging them into hnRNP particles. The hnRNP particle arrangement on nascent hnRNA is non-random and sequence-dependent and serves to condense and stabilize the transcripts and minimize tangling and knotting. Packaging plays a role in various processes such as transcription, pre-mRNA processing, RNA nuclear export, subcellular location, mRNA translation and stability of mature mRNAs. Forms hnRNP particles with at least 20 other different hnRNP and heterogeneous nuclear RNA in the nucleus. Involved in transport of specific mRNAs to the cytoplasm in oligodendrocytes and neurons: acts by specifically recognizing and binding the A2RE (21 nucleotide hnRNP A2 response element) or the A2RE11 (derivative 11 nucleotide oligonucleotide) sequence motifs present on some mRNAs, and promotes their transport to the cytoplasm. Specifically binds single-stranded telomeric DNA sequences, protecting telomeric DNA repeat against endonuclease digestion. Also binds other RNA molecules, such as primary miRNA (pri-miRNAs): acts as a nuclear 'reader' of the N6-methyladenosine (m6A) mark by specifically recognizing and binding a subset of nuclear m6A-containing pri-miRNAs. Binding to m6A-containing pri-miRNAs promotes pri-miRNA processing by enhancing binding of DGCR8 to pri-miRNA transcripts. Involved in miRNA sorting into exosomes following sumoylation, possibly by binding (m6A)-containing pre-miRNAs. Acts as a regulator of efficiency of mRNA splicing, possibly by binding to m6A-containing pre-mRNAs. Plays a role in the splicing of pyruvate kinase PKM by binding repressively to sequences flanking PKM exon 9, inhibiting exon 9 inclusion and resulting in exon 10 inclusion and production of the PKM M2 isoform. The sequence is that of Heterogeneous nuclear ribonucleoproteins A2/B1 (HNRNPA2B1) from Pongo abelii (Sumatran orangutan).